A 250-amino-acid polypeptide reads, in one-letter code: Tumor necrosis factor ligand superfamily member 13 (250 aa).

Residues 1–104 constitute a propeptide that is removed on maturation; that stretch reads MPASSPFLLA…ENGERSRKRR (104 aa). Disordered regions lie at residues 61-82 and 89-108; these read EVSR…PWQS and DALE…AVLT. Positions 116–250 constitute a THD domain; it reads SVLHLVPINA…HGTFLGFVKL (135 aa). The N-linked (GlcNAc...) asparagine glycan is linked to Asn-124. A disulfide bond links Cys-196 and Cys-211.

This sequence belongs to the tumor necrosis factor family. As to quaternary structure, homotrimer. The precursor is cleaved by furin. Expressed at high levels in transformed cell lines, cancers of colon, thyroid, lymphoid tissues and specifically expressed in monocytes and macrophages.

The protein localises to the secreted. Its function is as follows. Cytokine that binds to TNFRSF13B/TACI and to TNFRSF17/BCMA. Plays a role in the regulation of tumor cell growth. May be involved in monocyte/macrophage-mediated immunological processes. In Homo sapiens (Human), this protein is Tumor necrosis factor ligand superfamily member 13 (TNFSF13).